The sequence spans 148 residues: uncharacterized protein (148 aa).

The HTH asnC-type domain maps to 4–65 (LDRVDMQLVK…IPDIDKLGYM (62 aa)). The segment at residues 23–42 (YRELADILNTTRQRIARRID) is a DNA-binding region (H-T-H motif).

This is an uncharacterized protein from Pyrococcus horikoshii (strain ATCC 700860 / DSM 12428 / JCM 9974 / NBRC 100139 / OT-3).